The sequence spans 275 residues: Glycerol-3-phosphate dehydrogenase [NAD(P)+] (275 aa).

Positions 12, 32, and 105 each coordinate NADPH. Sn-glycerol 3-phosphate is bound by residues Lys105, Gly133, and Thr135. Residue Ala137 coordinates NADPH. The sn-glycerol 3-phosphate site is built by Lys188, Asp241, Ser251, Arg252, and Asn253. Lys188 serves as the catalytic Proton acceptor. Residue Arg252 participates in NADPH binding.

This sequence belongs to the NAD-dependent glycerol-3-phosphate dehydrogenase family.

It is found in the cytoplasm. It carries out the reaction sn-glycerol 3-phosphate + NAD(+) = dihydroxyacetone phosphate + NADH + H(+). The catalysed reaction is sn-glycerol 3-phosphate + NADP(+) = dihydroxyacetone phosphate + NADPH + H(+). It functions in the pathway membrane lipid metabolism; glycerophospholipid metabolism. Functionally, catalyzes the reduction of the glycolytic intermediate dihydroxyacetone phosphate (DHAP) to sn-glycerol 3-phosphate (G3P), the key precursor for phospholipid synthesis. The sequence is that of Glycerol-3-phosphate dehydrogenase [NAD(P)+] from Paramagnetospirillum magneticum (strain ATCC 700264 / AMB-1) (Magnetospirillum magneticum).